Consider the following 471-residue polypeptide: Alpha-1,3/1,6-mannosyltransferase alg-2 (471 aa).

N-linked (GlcNAc...) asparagine glycosylation is found at N178 and N279. The helical transmembrane segment at 446–466 (GMILLVVGAAVAAVAGVISAV) threads the bilayer.

Belongs to the glycosyltransferase group 1 family. Glycosyltransferase 4 subfamily.

It localises to the endoplasmic reticulum membrane. It catalyses the reaction a beta-D-Man-(1-&gt;4)-beta-D-GlcNAc-(1-&gt;4)-alpha-D-GlcNAc-diphospho-di-trans,poly-cis-dolichol + GDP-alpha-D-mannose = an alpha-D-Man-(1-&gt;3)-beta-D-Man-(1-&gt;4)-beta-D-GlcNAc-(1-&gt;4)-alpha-D-GlcNAc-diphospho-di-trans,poly-cis-dolichol + GDP + H(+). The catalysed reaction is an alpha-D-Man-(1-&gt;3)-beta-D-Man-(1-&gt;4)-beta-D-GlcNAc-(1-&gt;4)-alpha-D-GlcNAc-diphospho-di-trans,poly-cis-dolichol + GDP-alpha-D-mannose = an alpha-D-Man-(1-&gt;3)-[alpha-D-Man-(1-&gt;6)]-beta-D-Man-(1-&gt;4)-beta-D-GlcNAc-(1-&gt;4)-alpha-D-GlcNAc-diphospho-di-trans,poly-cis-dolichol + GDP + H(+). The protein operates within protein modification; protein glycosylation. In terms of biological role, mannosylates Man(2)GlcNAc(2)-dolichol diphosphate and Man(1)GlcNAc(2)-dolichol diphosphate to form Man(3)GlcNAc(2)-dolichol diphosphate. The sequence is that of Alpha-1,3/1,6-mannosyltransferase alg-2 (alg-2) from Neurospora crassa (strain ATCC 24698 / 74-OR23-1A / CBS 708.71 / DSM 1257 / FGSC 987).